Here is a 272-residue protein sequence, read N- to C-terminus: Protein SSO0103 (272 aa).

It belongs to the CinA family.

This chain is Protein SSO0103, found in Saccharolobus solfataricus (strain ATCC 35092 / DSM 1617 / JCM 11322 / P2) (Sulfolobus solfataricus).